We begin with the raw amino-acid sequence, 298 residues long: tRNA (guanine(9)-N1)-methyltransferase (298 aa).

Residues 1 to 10 (MSDTSENSNA) are compositionally biased toward polar residues. Positions 1–44 (MSDTSENSNAEIPADTSDVKDKPKPIVRAPQFPPPPEGISKSQW) are disordered. The 190-residue stretch at 96-285 (PPKVNLNQSD…SVLPPRKLEV (190 aa)) folds into the SAM-dependent MTase TRM10-type domain. S-adenosyl-L-methionine-binding positions include 192–193 (LT), G212, 216–220 (DKNRH), C224, L238, and 250–252 (KVL). D216 acts as the Proton acceptor in catalysis.

It belongs to the class IV-like SAM-binding methyltransferase superfamily. TRM10 family. As to quaternary structure, monomer.

Its subcellular location is the cytoplasm. It is found in the nucleus. The catalysed reaction is guanosine(9) in tRNA + S-adenosyl-L-methionine = N(1)-methylguanosine(9) in tRNA + S-adenosyl-L-homocysteine + H(+). S-adenosyl-L-methionine-dependent guanine N(1)-methyltransferase that catalyzes the formation of N(1)-methylguanine at position 9 (m1G9) in cytoplasmic tRNA. The polypeptide is tRNA (guanine(9)-N1)-methyltransferase (Kluyveromyces lactis (strain ATCC 8585 / CBS 2359 / DSM 70799 / NBRC 1267 / NRRL Y-1140 / WM37) (Yeast)).